Here is a 273-residue protein sequence, read N- to C-terminus: Soluble P-type ATPase-like phosphatase (273 aa).

The 4-aspartylphosphate intermediate role is filled by Asp-8.

It belongs to the cation transport ATPase (P-type) (TC 3.A.3) family. Type IB subfamily. Requires Mg(2+) as cofactor.

Inhibited by orthovanadate. Its function is as follows. Most probably acts as a phosphatase in the cytosol. The protein is Soluble P-type ATPase-like phosphatase (patS) of Methanocaldococcus jannaschii (strain ATCC 43067 / DSM 2661 / JAL-1 / JCM 10045 / NBRC 100440) (Methanococcus jannaschii).